The primary structure comprises 269 residues: Formamidopyrimidine-DNA glycosylase (269 aa).

Pro2 acts as the Schiff-base intermediate with DNA in catalysis. Glu3 serves as the catalytic Proton donor. The active-site Proton donor; for beta-elimination activity is Lys57. Positions 90, 109, and 150 each coordinate DNA. The FPG-type zinc finger occupies 235–269; sequence QVYGKGGLPCPKCGTELAEVKIGQRATVYCSQCQQ. Catalysis depends on Arg259, which acts as the Proton donor; for delta-elimination activity.

This sequence belongs to the FPG family. As to quaternary structure, monomer. The cofactor is Zn(2+).

It catalyses the reaction Hydrolysis of DNA containing ring-opened 7-methylguanine residues, releasing 2,6-diamino-4-hydroxy-5-(N-methyl)formamidopyrimidine.. It carries out the reaction 2'-deoxyribonucleotide-(2'-deoxyribose 5'-phosphate)-2'-deoxyribonucleotide-DNA = a 3'-end 2'-deoxyribonucleotide-(2,3-dehydro-2,3-deoxyribose 5'-phosphate)-DNA + a 5'-end 5'-phospho-2'-deoxyribonucleoside-DNA + H(+). Its function is as follows. Involved in base excision repair of DNA damaged by oxidation or by mutagenic agents. Acts as a DNA glycosylase that recognizes and removes damaged bases. Has a preference for oxidized purines, such as 7,8-dihydro-8-oxoguanine (8-oxoG). Has AP (apurinic/apyrimidinic) lyase activity and introduces nicks in the DNA strand. Cleaves the DNA backbone by beta-delta elimination to generate a single-strand break at the site of the removed base with both 3'- and 5'-phosphates. This chain is Formamidopyrimidine-DNA glycosylase, found in Photobacterium damsela subsp. piscicida (Pasteurella piscicida).